Consider the following 456-residue polypeptide: Bifunctional protein GlmU (456 aa).

Residues 1 to 229 (MLNNTMSVVI…ISETDGVNNR (229 aa)) form a pyrophosphorylase region. UDP-N-acetyl-alpha-D-glucosamine contacts are provided by residues 11-14 (LAAG), Lys-25, Gln-76, 81-82 (GT), 103-105 (YGD), Gly-140, Glu-154, Asn-169, and Asn-227. Asp-105 contacts Mg(2+). Mg(2+) is bound at residue Asn-227. The tract at residues 230-250 (LQLSRLERIYQAEQAEKLLLA) is linker. The N-acetyltransferase stretch occupies residues 251-456 (GVMLRDPARF…QGWQRPVKKK (206 aa)). UDP-N-acetyl-alpha-D-glucosamine-binding residues include Arg-333 and Lys-351. His-363 (proton acceptor) is an active-site residue. Residues Tyr-366 and Asn-377 each coordinate UDP-N-acetyl-alpha-D-glucosamine. Residues Ala-380, 386–387 (NY), Ser-405, Ala-423, and Arg-440 each bind acetyl-CoA.

In the N-terminal section; belongs to the N-acetylglucosamine-1-phosphate uridyltransferase family. This sequence in the C-terminal section; belongs to the transferase hexapeptide repeat family. Homotrimer. It depends on Mg(2+) as a cofactor.

The protein resides in the cytoplasm. The catalysed reaction is alpha-D-glucosamine 1-phosphate + acetyl-CoA = N-acetyl-alpha-D-glucosamine 1-phosphate + CoA + H(+). It carries out the reaction N-acetyl-alpha-D-glucosamine 1-phosphate + UTP + H(+) = UDP-N-acetyl-alpha-D-glucosamine + diphosphate. The protein operates within nucleotide-sugar biosynthesis; UDP-N-acetyl-alpha-D-glucosamine biosynthesis; N-acetyl-alpha-D-glucosamine 1-phosphate from alpha-D-glucosamine 6-phosphate (route II): step 2/2. Its pathway is nucleotide-sugar biosynthesis; UDP-N-acetyl-alpha-D-glucosamine biosynthesis; UDP-N-acetyl-alpha-D-glucosamine from N-acetyl-alpha-D-glucosamine 1-phosphate: step 1/1. It participates in bacterial outer membrane biogenesis; LPS lipid A biosynthesis. Catalyzes the last two sequential reactions in the de novo biosynthetic pathway for UDP-N-acetylglucosamine (UDP-GlcNAc). The C-terminal domain catalyzes the transfer of acetyl group from acetyl coenzyme A to glucosamine-1-phosphate (GlcN-1-P) to produce N-acetylglucosamine-1-phosphate (GlcNAc-1-P), which is converted into UDP-GlcNAc by the transfer of uridine 5-monophosphate (from uridine 5-triphosphate), a reaction catalyzed by the N-terminal domain. The chain is Bifunctional protein GlmU from Enterobacter sp. (strain 638).